Consider the following 1283-residue polypeptide: 5-oxoprolinase PfmaA (1283 aa).

Residues 1256–1283 (NTPGGGAWGKPEGDADGYREEDQAGDGI) are disordered. Over residues 1266 to 1277 (PEGDADGYREED) the composition is skewed to basic and acidic residues.

The protein belongs to the oxoprolinase family. In terms of assembly, homodimer.

The catalysed reaction is 5-oxo-L-proline + ATP + 2 H2O = L-glutamate + ADP + phosphate + H(+). Functionally, 5-oxoprolinase; part of the gene cluster that mediates the biosynthesis of dihydroxynaphthalene (DHN)-melanin, a bluish-green pigment forming a dark layer in the conidial wall that protects the conidia from UV radiations. The first step of the pathway is the production of the pentaketide 1,3,6,8-tetrahydroxynaphthalene (1,3,6,8-THN or T4HN) by the polyketide synthase PfmaE though condensation of acetyl-CoA with malonyl-CoA. T4HN is not stable and easily oxidizes into the stable form flaviolin. T4HN is also substrate of the hydroxynaphthalene reductase PfmaG to yield scytalone. The scytalone dehydratase PfmaJ then reduces scytalone to 1,3,8-THN. 1,3,8-THN is then substrate of the hydroxynaphthalene reductase PfmaI to yield vermelone. Vermelone is further converted by the multicopper oxidase PfmaD to 1,8-DHN. Finally the laccase PFICI_06862 transforms 1,8-DHN to DHN-melanin. The roles of the 5-oxoprolinase PfmaA and the proline iminopeptidase PfmaB within the cluster have not been elucidated yet. The polypeptide is 5-oxoprolinase PfmaA (Pestalotiopsis fici (strain W106-1 / CGMCC3.15140)).